A 247-amino-acid polypeptide reads, in one-letter code: Orotidine 5'-phosphate decarboxylase (247 aa).

Residues aspartate 16, lysine 38, 66–75, threonine 130, arginine 191, glutamine 200, glycine 220, and arginine 221 each bind substrate; that span reads DLKFHDIPNT. The Proton donor role is filled by lysine 68.

The protein belongs to the OMP decarboxylase family. Type 1 subfamily. Homodimer.

It catalyses the reaction orotidine 5'-phosphate + H(+) = UMP + CO2. It functions in the pathway pyrimidine metabolism; UMP biosynthesis via de novo pathway; UMP from orotate: step 2/2. Catalyzes the decarboxylation of orotidine 5'-monophosphate (OMP) to uridine 5'-monophosphate (UMP). The chain is Orotidine 5'-phosphate decarboxylase from Rhodospirillum rubrum (strain ATCC 11170 / ATH 1.1.1 / DSM 467 / LMG 4362 / NCIMB 8255 / S1).